The chain runs to 465 residues: Mothers against decapentaplegic homolog 5 (465 aa).

Positions 13–137 (PAVKRLLGWK…YKRVESPVLP (125 aa)) constitute an MH1 domain. Residues cysteine 65, cysteine 110, cysteine 122, and histidine 127 each contribute to the Zn(2+) site. A disordered region spans residues 163–242 (NEPHMPHNAT…MGQDNSQSMD (80 aa)). The segment covering 173–183 (FPDSFQQPNST) has biased composition (polar residues). Low complexity predominate over residues 198 to 214 (ASSTYPSSPASSGPSSP). Residues 271-465 (WCSIVYYELN…SPLNPISSVS (195 aa)) enclose the MH2 domain.

This sequence belongs to the dwarfin/SMAD family. May form trimers with the co-SMAD SMAD4.

It localises to the cytoplasm. The protein localises to the nucleus. In terms of biological role, transcriptional modulator activated by BMP (bone morphogenetic proteins) type 1 receptor kinase. SMAD5 is a receptor-regulated SMAD (R-SMAD). In Gallus gallus (Chicken), this protein is Mothers against decapentaplegic homolog 5 (SMAD5).